Here is a 97-residue protein sequence, read N- to C-terminus: Aspartyl/glutamyl-tRNA(Asn/Gln) amidotransferase subunit C (97 aa).

It belongs to the GatC family. As to quaternary structure, heterotrimer of A, B and C subunits.

The catalysed reaction is L-glutamyl-tRNA(Gln) + L-glutamine + ATP + H2O = L-glutaminyl-tRNA(Gln) + L-glutamate + ADP + phosphate + H(+). It carries out the reaction L-aspartyl-tRNA(Asn) + L-glutamine + ATP + H2O = L-asparaginyl-tRNA(Asn) + L-glutamate + ADP + phosphate + 2 H(+). In terms of biological role, allows the formation of correctly charged Asn-tRNA(Asn) or Gln-tRNA(Gln) through the transamidation of misacylated Asp-tRNA(Asn) or Glu-tRNA(Gln) in organisms which lack either or both of asparaginyl-tRNA or glutaminyl-tRNA synthetases. The reaction takes place in the presence of glutamine and ATP through an activated phospho-Asp-tRNA(Asn) or phospho-Glu-tRNA(Gln). This chain is Aspartyl/glutamyl-tRNA(Asn/Gln) amidotransferase subunit C, found in Synechococcus sp. (strain JA-3-3Ab) (Cyanobacteria bacterium Yellowstone A-Prime).